A 100-amino-acid chain; its full sequence is Putative membrane protein insertion efficiency factor (100 aa).

The protein belongs to the UPF0161 family.

The protein localises to the cell membrane. Functionally, could be involved in insertion of integral membrane proteins into the membrane. This Enterococcus faecalis (strain ATCC 700802 / V583) protein is Putative membrane protein insertion efficiency factor.